The sequence spans 855 residues: MAEGFAANRQWIGPEEAEELLDFDIATQMNEEGPLNPGINPFRVPGITETEKQDYCNMLQPKLQALRNEIQEVKLEEGNAGKFRRARFLRYSDETILSLIHLFIGYCTYLLNRKELGSLRHDIDIEAPQEECYSSREQSITDNIKYGKRCFIGTAGLYLLLFIGVGIYLGTAKAQVVWRLPPLVVPVEESEIIFWDCWAPEEPACQDFLGAMIHLKASTNISIQEGPTLGNWAKEIWGTLFKKATRQCRRGRIWKRWNETITGPLGCANNTCYNISVIVPDYQCYLDRVDTWLQGKVNVSLCLTGGKILYNKYTKQLSYCTDPLQIPLISYTFGPNQTCMWDTSQIQDPEIPKCGWWNQIAYYNSCRWESTDVKFHCQRTQSQPGLWLRAISSWKQRNRWEWRPDFESEKAKVSLQCNSTKNLTFAMRSSGDYGEVTGAWIEFGCHRNKSKLHTEARFRIRCRWNVGDNTSLIDTCGETQNVSGANPVDCTMYANRMYNCSLQNGFTMKVDDLIMHFNMTKAVEMYDIAGNWSCTSDLPPTWGYMNCNCTNSSSTNSVKMACPKNQGILRNWYNPVAGLRQSLEKYQVVKQPDYLVVPGEVMEYKPRRKRAAIHVMLALATVLSMAGAGTGATAIGMVTQYHQVLATHQETIEKVTEALKINNLRLVTLEHQVLVIGLKVEAMEKFLYTAFAMQELGCNQNQFFCKVPPELWKRYNMTINQTIWNHGNITLGEWYNQTKELQQKFYEIIMNIEQNNVQVKKGLQQLQEWEDWVGWIGNIPQYLKGLLGGILGIGIGVLLLILCLPTLVDCIRNCISKVLGYTVIAMPEIGDEEETVQMELRKNGRQCGMSEKEEE.

Topologically, residues 1-784 (MAEGFAANRQ…WIGNIPQYLK (784 aa)) are extracellular. N-linked (GlcNAc...) asparagine; by host glycosylation is found at Asn-220, Asn-258, Asn-269, Asn-274, Asn-298, Asn-336, Asn-418, Asn-422, Asn-448, Asn-469, Asn-481, Asn-499, Asn-518, Asn-531, Asn-548, and Asn-551. The segment at 615–635 (VMLALATVLSMAGAGTGATAI) is fusion peptide. The stretch at 642–692 (HQVLATHQETIEKVTEALKINNLRLVTLEHQVLVIGLKVEAMEKFLYTAFA) forms a coiled coil. Positions 661 to 679 (INNLRLVTLEHQVLVIGLK) are immunosuppression. N-linked (GlcNAc...) asparagine; by host glycosylation is found at Asn-716, Asn-720, Asn-728, and Asn-736. Residues 735 to 771 (YNQTKELQQKFYEIIMNIEQNNVQVKKGLQQLQEWED) adopt a coiled-coil conformation. A helical membrane pass occupies residues 785–805 (GLLGGILGIGIGVLLLILCLP). The Cytoplasmic portion of the chain corresponds to 806 to 855 (TLVDCIRNCISKVLGYTVIAMPEIGDEEETVQMELRKNGRQCGMSEKEEE).

As to quaternary structure, the mature envelope protein (Env) consists of a trimer of SU-TM heterodimers attached by noncovalent interactions or by a labile interchain disulfide bond. Specific enzymatic cleavages in vivo yield mature proteins. Envelope glycoproteins are synthesized as an inactive precursor that is N-glycosylated and processed likely by host cell furin or by a furin-like protease in the Golgi to yield the mature SU and TM proteins. The cleavage site between SU and TM requires the minimal sequence [KR]-X-[KR]-R.

The protein localises to the virion membrane. Its subcellular location is the host cell membrane. Its function is as follows. The surface protein (SU) attaches the virus to the host cell by binding to its receptor. This interaction triggers the refolding of the transmembrane protein (TM) and is thought to activate its fusogenic potential by unmasking its fusion peptide. Fusion occurs at the host cell plasma membrane. The transmembrane protein (TM) acts as a class I viral fusion protein. Under the current model, the protein has at least 3 conformational states: pre-fusion native state, pre-hairpin intermediate state, and post-fusion hairpin state. During viral and target cell membrane fusion, the coiled coil regions (heptad repeats) assume a trimer-of-hairpins structure, positioning the fusion peptide in close proximity to the C-terminal region of the ectodomain. The formation of this structure appears to drive apposition and subsequent fusion of viral and target cell membranes. Membranes fusion leads to delivery of the nucleocapsid into the cytoplasm. This chain is Envelope glycoprotein gp150 (env), found in Felidae (cat family).